A 137-amino-acid polypeptide reads, in one-letter code: Large ribosomal subunit protein uL16 (137 aa).

The protein belongs to the universal ribosomal protein uL16 family. In terms of assembly, part of the 50S ribosomal subunit.

In terms of biological role, binds 23S rRNA and is also seen to make contacts with the A and possibly P site tRNAs. The sequence is that of Large ribosomal subunit protein uL16 from Cereibacter sphaeroides (strain ATCC 17025 / ATH 2.4.3) (Rhodobacter sphaeroides).